A 167-amino-acid chain; its full sequence is UPF0102 protein RB9115 (167 aa).

This sequence belongs to the UPF0102 family.

The protein is UPF0102 protein RB9115 of Rhodopirellula baltica (strain DSM 10527 / NCIMB 13988 / SH1).